Reading from the N-terminus, the 272-residue chain is GPN-loop GTPase 3 (272 aa).

Position 12 to 17 (12 to 17 (GAGKST)) interacts with GTP. The short motif at 69–71 (GPN) is the Gly-Pro-Asn (GPN)-loop; involved in dimer interface element. 172–175 (SKMD) is a GTP binding site. The tract at residues 253–272 (QYGEDEEPKVPKDMDDGDFD) is disordered.

Belongs to the GPN-loop GTPase family. Heterodimers with GPN1 or GPN2. Binds to RNA polymerase II (RNAPII).

Functionally, small GTPase required for proper nuclear import of RNA polymerase II and III (RNAPII and RNAPIII). May act at an RNAP assembly step prior to nuclear import. In Cryptococcus neoformans var. neoformans serotype D (strain JEC21 / ATCC MYA-565) (Filobasidiella neoformans), this protein is GPN-loop GTPase 3.